Reading from the N-terminus, the 145-residue chain is L-alanine exporter AlaE (145 aa).

4 helical membrane passes run 16–36 (FALV…LSGM), 42–62 (LSSR…YGLY), 86–106 (LFAY…VIGA), and 111–131 (ILTA…TYGY).

This sequence belongs to the AlaE exporter family.

It localises to the cell inner membrane. Its function is as follows. Exports L-alanine. The polypeptide is L-alanine exporter AlaE (Pectobacterium parmentieri (strain WPP163) (Pectobacterium wasabiae (strain WPP163))).